Consider the following 235-residue polypeptide: MTELARLKFYATQPHPCSYLPEEQATTLFLDPSQPMDTQLYASLSEVGFRRSGDHLYRPHCQHCTACIAARIPVADFSPNRQQRRILKRNAELQVIRKRPSFNEEYYDLYRRYIEQRHADGDMYPPSRDQFATFLVRDLPFCCFFEFRLHGRLLAIAVTDVLPNGLSAVYTFYDPDEEQRSLGRYAILWQIAETERLGLQAVYLGYWIKNCRKMNYKTQYRPIELFVNQRWVALT.

It belongs to the R-transferase family. Bpt subfamily.

Its subcellular location is the cytoplasm. It carries out the reaction N-terminal L-glutamyl-[protein] + L-leucyl-tRNA(Leu) = N-terminal L-leucyl-L-glutamyl-[protein] + tRNA(Leu) + H(+). The enzyme catalyses N-terminal L-aspartyl-[protein] + L-leucyl-tRNA(Leu) = N-terminal L-leucyl-L-aspartyl-[protein] + tRNA(Leu) + H(+). In terms of biological role, functions in the N-end rule pathway of protein degradation where it conjugates Leu from its aminoacyl-tRNA to the N-termini of proteins containing an N-terminal aspartate or glutamate. This chain is Aspartate/glutamate leucyltransferase, found in Pseudomonas aeruginosa (strain LESB58).